The chain runs to 171 residues: Transcription factor E (171 aa).

An HTH TFE/IIEalpha-type domain is found at Tyr-5–Glu-88.

This sequence belongs to the TFE family. In terms of assembly, monomer. Interaction with RNA polymerase subunits RpoF and RpoE is necessary for Tfe stimulatory transcription activity. Able to interact with Tbp and RNA polymerase in the absence of DNA promoter. Interacts both with the preinitiation and elongation complexes.

In terms of biological role, transcription factor that plays a role in the activation of archaeal genes transcribed by RNA polymerase. Facilitates transcription initiation by enhancing TATA-box recognition by TATA-box-binding protein (Tbp), and transcription factor B (Tfb) and RNA polymerase recruitment. Not absolutely required for transcription in vitro, but particularly important in cases where Tbp or Tfb function is not optimal. It dynamically alters the nucleic acid-binding properties of RNA polymerases by stabilizing the initiation complex and destabilizing elongation complexes. Seems to translocate with the RNA polymerase following initiation and acts by binding to the non template strand of the transcription bubble in elongation complexes. This chain is Transcription factor E, found in Cenarchaeum symbiosum (strain A).